Consider the following 295-residue polypeptide: Bifunctional protein FolD (295 aa).

NADP(+) contacts are provided by residues 166–168 (GRS), Thr-195, and Val-236.

The protein belongs to the tetrahydrofolate dehydrogenase/cyclohydrolase family. Homodimer.

The enzyme catalyses (6R)-5,10-methylene-5,6,7,8-tetrahydrofolate + NADP(+) = (6R)-5,10-methenyltetrahydrofolate + NADPH. The catalysed reaction is (6R)-5,10-methenyltetrahydrofolate + H2O = (6R)-10-formyltetrahydrofolate + H(+). It participates in one-carbon metabolism; tetrahydrofolate interconversion. In terms of biological role, catalyzes the oxidation of 5,10-methylenetetrahydrofolate to 5,10-methenyltetrahydrofolate and then the hydrolysis of 5,10-methenyltetrahydrofolate to 10-formyltetrahydrofolate. In Syntrophobacter fumaroxidans (strain DSM 10017 / MPOB), this protein is Bifunctional protein FolD.